Here is a 215-residue protein sequence, read N- to C-terminus: MSKVYDWFEERLEIQTIADDITSKYVPPHVNIFYCLGGITLTCFLVQVATGFAMTFYYRPTVTEAFASVQYIMTEANFGWLIRSVHRWSASMMVLMMILHVFRVYLTGGFKKPRELTWVTGVVLGVLTASFGVTGYSLPWDQIGYWAVKIVTGVPEAIPVIGSPLVELLRGSASVGQSTLTRFYSLHTFVLPLLTAVFMLMHFPMIRKQGISGPL.

The chain crosses the membrane as a helical span at residues 32-52 (IFYCLGGITLTCFLVQVATGF). Residue C35 participates in heme c binding. 2 residues coordinate heme b: H86 and H100. A run of 3 helical transmembrane segments spans residues 90–110 (ASMMVLMMILHVFRVYLTGGF), 116–136 (LTWVTGVVLGVLTASFGVTGY), and 186–206 (LHTFVLPLLTAVFMLMHFPMI). Heme b is bound by residues H187 and H202.

It belongs to the cytochrome b family. PetB subfamily. The 4 large subunits of the cytochrome b6-f complex are cytochrome b6, subunit IV (17 kDa polypeptide, PetD), cytochrome f and the Rieske protein, while the 4 small subunits are PetG, PetL, PetM and PetN. The complex functions as a dimer. Requires heme b as cofactor. It depends on heme c as a cofactor.

It localises to the plastid. It is found in the chloroplast thylakoid membrane. Component of the cytochrome b6-f complex, which mediates electron transfer between photosystem II (PSII) and photosystem I (PSI), cyclic electron flow around PSI, and state transitions. The protein is Cytochrome b6 of Populus alba (White poplar).